A 79-amino-acid chain; its full sequence is uncharacterized protein (79 aa).

It belongs to the UPF0440 family.

This is an uncharacterized protein from Methanocella arvoryzae (strain DSM 22066 / NBRC 105507 / MRE50).